Reading from the N-terminus, the 556-residue chain is Phospholipase D (556 aa).

An N-terminal signal peptide occupies residues 1 to 47; the sequence is MTSDQRPARLPTHKGKLLAPHRLHRLIPVSVALTTVCAALPSSTAYA. The PLD phosphodiesterase 1 domain maps to 210–237; that stretch reads SLSWNHSKLLVVDGKTAITGGINGWKDD. The interval 326 to 360 is disordered; sequence SDPSSGYHPDLPTAPDTKCTVGLHDNTNADRDYDT. In terms of domain architecture, PLD phosphodiesterase 2 spans 484 to 511; the sequence is KPYALHHKLVSVDDSAFYIGSKNLYPAW.

It belongs to the phospholipase D family. In terms of processing, probably has at least 1 disulfide bond.

Its subcellular location is the secreted. It carries out the reaction a 1,2-diacyl-sn-glycero-3-phosphocholine + H2O = a 1,2-diacyl-sn-glycero-3-phosphate + choline + H(+). Its activity is regulated as follows. Inhibited by mercaptoethanol and dithiothreitol. Functionally, a reversible phospholipase active on phosphatidylcholine (PC) and phosphatidylethanolamine. Lysophosphatidylcholine and egg sphingomyelin are hydrolyzed about 50 times and 100 times more slowly than PC, respectively. During the transphosphatidylation reaction straight-chain hydroxy compounds, such as triethyleneglycol and triethyleneglycol monomethyl ether, were phosphatidylated in good yield, as were monosaccharides. Disaccharides and sugar alcohol reacted slowly, while N-acetyl-D-galactosamine, D-galactosamine and D-galacturonic acid were not phosphatidylated. This chain is Phospholipase D, found in Streptomyces antibioticus.